The sequence spans 417 residues: Phosphoglycerate kinase, cytosolic (417 aa).

(2R)-3-phosphoglycerate contacts are provided by valine 23, aspartate 24, phenylalanine 25, asparagine 26, arginine 39, serine 61, histidine 62, glycine 64, arginine 65, arginine 132, histidine 168, and arginine 169. ADP is bound by residues glycine 214 and alanine 215. Glycine 214 lines the CDP pocket. Positions 215 and 216 each coordinate AMP. Alanine 215 lines the ATP pocket. Alanine 215 serves as a coordination point for Mg(2+). Lysine 216 contacts (2R)-3-phosphoglycerate. Aspartate 219 contributes to the CDP binding site. Residue aspartate 219 coordinates Mg(2+). Residues lysine 220 and glycine 238 each coordinate ADP. Lysine 220 contacts AMP. Lysine 220 contributes to the ATP binding site. Glycine 238 contacts CDP. AMP contacts are provided by alanine 239 and alanine 311. ATP-binding residues include alanine 239 and alanine 311. The ADP site is built by alanine 311 and asparagine 335. Residues glycine 336 and phenylalanine 341 each contribute to the CDP site. ADP contacts are provided by phenylalanine 341, glutamate 342, aspartate 374, and serine 375. Glutamate 342 lines the AMP pocket. Residues glutamate 342, aspartate 374, and serine 375 each contribute to the ATP site. Aspartate 374 serves as a coordination point for Mg(2+).

This sequence belongs to the phosphoglycerate kinase family. As to quaternary structure, monomer. Mg(2+) serves as cofactor.

The protein resides in the cytoplasm. The enzyme catalyses (2R)-3-phosphoglycerate + ATP = (2R)-3-phospho-glyceroyl phosphate + ADP. It participates in carbohydrate degradation; glycolysis; pyruvate from D-glyceraldehyde 3-phosphate: step 2/5. The chain is Phosphoglycerate kinase, cytosolic (PGKB) from Leishmania major.